An 828-amino-acid polypeptide reads, in one-letter code: Kinesin-associated protein 3 (828 aa).

ARM repeat units follow at residues 332 to 372 (YVEN…NLSF), 373 to 411 (DTDL…HVSQ), and 577 to 611 (DDSC…CQIV).

In terms of assembly, heterotrimer of a 115 kDa subunit (KAP115) and two kinesin-like subunits of 95 kDa (KRP95) and 85 kDa (KRP85).

Binds to the tail domain of the KRP85/KRP95 heterodimer to form a heterotrimeric kinesin-II complex and may regulate the spindle vesicle targeting of this complex. This Strongylocentrotus purpuratus (Purple sea urchin) protein is Kinesin-associated protein 3 (KAP115).